The following is a 777-amino-acid chain: 5-methyltetrahydropteroyltriglutamate--homocysteine methyltransferase (777 aa).

5-methyltetrahydropteroyltri-L-glutamate contacts are provided by residues 17-20 (RELK) and Lys-132. L-homocysteine is bound by residues 455 to 457 (IGS) and Glu-508. L-methionine is bound by residues 455–457 (IGS) and Glu-508. 5-methyltetrahydropteroyltri-L-glutamate is bound by residues 539–540 (RC) and Trp-585. Residue Asp-623 coordinates L-homocysteine. Residue Asp-623 participates in L-methionine binding. Residue Glu-629 coordinates 5-methyltetrahydropteroyltri-L-glutamate. Zn(2+) is bound by residues His-665, Cys-667, and Glu-689. His-718 acts as the Proton donor in catalysis. Zn(2+) is bound at residue Cys-750.

This sequence belongs to the vitamin-B12 independent methionine synthase family. Requires Zn(2+) as cofactor.

It carries out the reaction 5-methyltetrahydropteroyltri-L-glutamate + L-homocysteine = tetrahydropteroyltri-L-glutamate + L-methionine. It functions in the pathway amino-acid biosynthesis; L-methionine biosynthesis via de novo pathway; L-methionine from L-homocysteine (MetE route): step 1/1. Its function is as follows. Catalyzes the transfer of a methyl group from 5-methyltetrahydrofolate to homocysteine resulting in methionine formation. This chain is 5-methyltetrahydropteroyltriglutamate--homocysteine methyltransferase, found in Caulobacter vibrioides (strain ATCC 19089 / CIP 103742 / CB 15) (Caulobacter crescentus).